Consider the following 181-residue polypeptide: uncharacterized protein (181 aa).

This is an uncharacterized protein from Acheta domesticus (House cricket).